Consider the following 189-residue polypeptide: GTPase KRas (189 aa).

Met1 is subject to N-acetylmethionine. N-acetylthreonine; in GTPase KRas, N-terminally processed is present on Thr2. GTP-binding positions include 10 to 18, 29 to 35, and 59 to 60; these read GAGGVGKSA, VDEYDPT, and AG. The Effector region motif lies at 32 to 40; the sequence is YDPTIEDSY. Lys104 bears the N6-acetyllysine mark. 116 to 119 contacts GTP; the sequence is NKCD. The segment at 166-185 is hypervariable region; sequence YRLKKISKEEKTPGCVKIKK. Residue Lys170 forms a Glycyl lysine isopeptide (Lys-Gly) (interchain with G-Cter in ubiquitin) linkage. Cys180 carries the S-palmitoyl cysteine lipid modification. 3 N6-palmitoyl lysine lipidation sites follow: Lys182, Lys184, and Lys185. The residue at position 186 (Cys186) is a Cysteine methyl ester. A lipid anchor (S-farnesyl cysteine) is attached at Cys186. Positions 187–189 are cleaved as a propeptide — removed in mature form; it reads VIM.

It belongs to the small GTPase superfamily. Ras family. In terms of assembly, interacts with PHLPP. Interacts (active GTP-bound form preferentially) with RGS14. Interacts (when farnesylated) with PDE6D; this promotes dissociation from the cell membrane. Interacts with SOS1. Interacts (when farnesylated) with GPR31. Interacts with RAP1GDS1. Interacts (active GTP-bound form) with both SHOC2 and PP1c (all isoforms) to form a tertiary complex; SHOC2 and PP1c preferably bind M-Ras/MRAS, but they also bind K-Ras/KRAS, N-Ras/NRAS and H-Ras/HRAS. Interacts (GTP-bound form) with MAPKAP1/SIN1; inhibiting K-Ras/KRAS activity. Interacts (when farnesylated) with GPR31. Acetylation at Lys-104 prevents interaction with guanine nucleotide exchange factors (GEFs). In terms of processing, ubiquitinated by the BCR(LZTR1) E3 ubiquitin ligase complex at Lys-170 in a non-degradative manner, leading to inhibit Ras signaling by decreasing Ras association with membranes. Post-translationally, palmitoylated at Lys-182, Lys-184 and Lys-185. Lysine-depalmitoylation by SIRT2 promotes its localization to endomembranes in endocytic pathways.

It is found in the cell membrane. Its subcellular location is the endomembrane system. The protein localises to the cytoplasm. The protein resides in the cytosol. It catalyses the reaction GTP + H2O = GDP + phosphate + H(+). Its activity is regulated as follows. Alternates between an inactive form bound to GDP and an active form bound to GTP. Activated by a guanine nucleotide-exchange factor (GEF) and inactivated by a GTPase-activating protein (GAP). Interaction with SOS1 promotes exchange of bound GDP to GTP. Ras proteins bind GDP/GTP and possess intrinsic GTPase activity. Plays an important role in the regulation of cell proliferation. Plays a role in promoting oncogenic events by inducing transcriptional silencing of tumor suppressor genes (TSGs) in colorectal cancer (CRC) cells in a ZNF304-dependent manner. The polypeptide is GTPase KRas (Kras) (Rattus norvegicus (Rat)).